Reading from the N-terminus, the 574-residue chain is Septation ring formation regulator EzrA (574 aa).

Over 1–7 the chain is Extracellular; that stretch reads MSNGLII. Residues 8–26 traverse the membrane as a helical segment; the sequence is LIIVIAVALILAYVAAVVL. Over 27–574 the chain is Cytoplasmic; the sequence is RKRNETLLDS…YEKTRENIRF (548 aa). 3 coiled-coil regions span residues 104-141, 267-424, and 456-524; these read LKAKHAIDSIESQINLVEEDIELIREALADLEKQEAKN, NITQ…QKVN, and ASDH…SIQE.

The protein belongs to the EzrA family.

Its subcellular location is the cell membrane. In terms of biological role, negative regulator of FtsZ ring formation; modulates the frequency and position of FtsZ ring formation. Inhibits FtsZ ring formation at polar sites. Interacts either with FtsZ or with one of its binding partners to promote depolymerization. The chain is Septation ring formation regulator EzrA from Streptococcus gordonii (strain Challis / ATCC 35105 / BCRC 15272 / CH1 / DL1 / V288).